Reading from the N-terminus, the 207-residue chain is Outer-membrane lipoprotein LolB (207 aa).

The N-terminal stretch at 1 to 21 is a signal peptide; the sequence is MPMRKRHFYRLLPLASLLLAA. Residue cysteine 22 is the site of N-palmitoyl cysteine attachment. Cysteine 22 is lipidated: S-diacylglycerol cysteine.

This sequence belongs to the LolB family. As to quaternary structure, monomer.

The protein resides in the cell outer membrane. In terms of biological role, plays a critical role in the incorporation of lipoproteins in the outer membrane after they are released by the LolA protein. The sequence is that of Outer-membrane lipoprotein LolB from Yersinia pseudotuberculosis serotype O:1b (strain IP 31758).